We begin with the raw amino-acid sequence, 594 residues long: Putative aldehyde oxidase Art an 7 (594 aa).

Residues 1 to 23 (MASSIKTVILFLLPLLLAYSVLA) form the signal peptide. Residues 28–56 (TDGGDKPGPEIDDGGGDKPVPGNNDGASD) form a disordered region.

In terms of processing, the N-terminus is blocked. Post-translationally, glycosylated. Expressed in pollen (at protein level).

The protein resides in the cytoplasm. It carries out the reaction an aldehyde + O2 + H2O = a carboxylate + H2O2 + H(+). Catalyzes the oxidation of aldehydes to the corresponding carboxylate by coupling the reaction to the reduction of dioxygen to hydrogen peroxide. Substrates include glyoxal and other aldehydes. Does not have enzymatic activity on D-galactose. This Artemisia annua (Sweet wormwood) protein is Putative aldehyde oxidase Art an 7.